The sequence spans 265 residues: Mlc titration factor A (265 aa).

Residues His-111, His-148, His-152, and Glu-211 each coordinate Zn(2+).

This sequence belongs to the MtfA family. Interacts with Mlc. It depends on Zn(2+) as a cofactor.

It localises to the cytoplasm. In terms of biological role, involved in the modulation of the activity of the glucose-phosphotransferase system (glucose-PTS). Interacts with the transcriptional repressor Mlc, preventing its interaction with DNA and leading to the modulation of expression of genes regulated by Mlc, including ptsG, which encodes the PTS system glucose-specific EIICB component. Its function is as follows. Shows zinc-dependent metallopeptidase activity. This chain is Mlc titration factor A, found in Escherichia coli O9:H4 (strain HS).